Consider the following 1004-residue polypeptide: LRGEVRGLPSSFRVVTSRIVNDGIGISAIVINDPEADVLVIEDCTDEYGVCVLIKGATCSMYVVSVYCRFGTALGPYLQYMENVRVKCGNTYMIMGMDANAVSPLWFSKGENLGRGRLNEANGLLLEEWILEGRMIVINEPSEWYTFSGPNGSSDIDVTLVNEAGGRFGYEWSVQPEWGVSDHNLIRIRVSLDGLVADASPSPQSARWQTRDTDWGEYMGDVKAKADVFGLAQYENVSVDEKVDLLTEWIYGANDWNMRRHTAVRTFQNEWWSVELAEKRSELRRRRHAFQRIRNAGAASLADRLQAFRDCKIEYKRMLCEAKLRCWQEFVASESNENPWGRVFKLCRGRRKPVDVCSVKVDGVYTDTWEGSVNAMMNVFFPASIDDASEIDRLKAIARPLPPDLEMDEVSDSVRRCKVRKSPGPDGIVGEMVRAVWGAIPEYMFCLYKQCLLESYFPQKWKIASLVILLKLLDRIRSDPGSYRPICLLDNLGKVLEGIMVKRLDQKLMDVEVSPYQFAFTYGKSTEDAWRCVQRHVECSEMKYVIGLNIDFQGAFDNLGWLSMLLKLDEAQSNEFGLWMSYFGGRKVYYVGKTGIVRKDVTRGCPQGSKSGPAMWKLVMNELLLALVAAGFFIVAFADDGTIVIGANSRSALEELGTRCLQLCHEWGKRVCVPVSAGKTTCILMKGHLSANRPPCIRLNGTSISYKSEVKHLGIFVAERMNFRPHFVYLRGKILGLVGCLRRVMRKSWGLGRRATCILYKGLFVACMSYGASVWFRTLRFSYASILLNRCQRLVLYASLNVCRTVSTERMQVLHGELPWDLEATRRGLLSEFRKGITPVDGDPITDEEMLGLSGSQFKELLMERLLDVWQGRWDVSEKGRLTHEFIPSVRFVRENEWMAFGLCLGYVLTGHGSMNGFLHKRGLSNTPVCMCGAPNEDVKHLLGECPLYEDLRDLNGCGLLIRNGSLDVSGALSEIGAFEKLNQFAVSLFGRRSRLMRGMRIRE.

The 268-residue stretch at 450-717 (QCLLESYFPQ…SEVKHLGIFV (268 aa)) folds into the Reverse transcriptase domain. Residues 853 to 1004 (LSGSQFKELL…RLMRGMRIRE (152 aa)) form a nucleic acid-binding endonuclease region.

It catalyses the reaction DNA(n) + a 2'-deoxyribonucleoside 5'-triphosphate = DNA(n+1) + diphosphate. This is Retrovirus-related Pol polyprotein from type-1 retrotransposable element R1 from Bradysia coprophila (Dark-winged fungus gnat).